The sequence spans 266 residues: Glucosamine-6-phosphate deaminase (266 aa).

Asp72 acts as the Proton acceptor; for enolization step in catalysis. Asp141 functions as the For ring-opening step in the catalytic mechanism. Catalysis depends on His143, which acts as the Proton acceptor; for ring-opening step. The active-site For ring-opening step is Glu148.

Belongs to the glucosamine/galactosamine-6-phosphate isomerase family. NagB subfamily. In terms of assembly, homohexamer; trimer of disulfide-linked dimers.

It catalyses the reaction alpha-D-glucosamine 6-phosphate + H2O = beta-D-fructose 6-phosphate + NH4(+). It participates in amino-sugar metabolism; N-acetylneuraminate degradation; D-fructose 6-phosphate from N-acetylneuraminate: step 5/5. Allosterically activated by N-acetylglucosamine 6-phosphate (GlcNAc6P). Catalyzes the reversible isomerization-deamination of glucosamine 6-phosphate (GlcN6P) to form fructose 6-phosphate (Fru6P) and ammonium ion. The chain is Glucosamine-6-phosphate deaminase from Shigella boydii serotype 18 (strain CDC 3083-94 / BS512).